A 465-amino-acid chain; its full sequence is Hepatocyte nuclear factor 6 (465 aa).

Disordered stretches follow at residues 15–84 (GVSH…GPLH) and 119–141 (SDKF…HQRL). Positions 123-140 (PHHHHHHHHHHHPHHHQR) are enriched in basic residues. A DNA-binding region (CUT) is located at residues 283–369 (GSNSGQMEEI…QRMSALRLAA (87 aa)). The homeobox DNA-binding region spans 385–444 (PKKPRLVFTDVQRRTLHAIFKENKRPSKELQITISQQLGLELSTVSNFFMNARRRSLDKW). The disordered stretch occupies residues 442-465 (DKWQDEGSSNSGNSSSSSSTCTKA). Residues 448–465 (GSSNSGNSSSSSSTCTKA) are compositionally biased toward low complexity.

It belongs to the CUT homeobox family. As to quaternary structure, binds DNA as a monomer. Expressed in liver, brain, spleen and testis.

The protein localises to the nucleus. In terms of biological role, transcriptional activator. Binds the consensus sequence 5'-DHWATTGAYTWWD-3' on a variety of gene promoters such as those of HNF3B and TTR. Important for liver genes transcription. The affinity of HNF-6-alpha and HNF-6-beta for DNA differs depending on the target sequence. The sequence is that of Hepatocyte nuclear factor 6 (Onecut1) from Rattus norvegicus (Rat).